A 28-amino-acid chain; its full sequence is Ranatuerin-2SEc (28 aa).

Cysteine 23 and cysteine 28 form a disulfide bridge.

Expressed by the skin glands.

It localises to the secreted. In terms of biological role, mast cell degranulating peptide. Causes histamine release from rat peritoneal mast cells in vitro. Has antibacterial activity against the Gram-negative bacterium E.coli K12 and Gram-positive bacterium M.luteus NCT C2665. In Lithobates sevosus (Dusky gopher frog), this protein is Ranatuerin-2SEc.